The sequence spans 349 residues: Short-wave-sensitive opsin 1 (349 aa).

At 1–34 (MSKMPEEEEFYLFKNISSVGPWDGPQYHIAPVWA) the chain is on the extracellular side. Asn15 is a glycosylation site (N-linked (GlcNAc...) asparagine). A helical transmembrane segment spans residues 35–59 (FQLQAAFMGIVFLAGLPLNSMVLVA). At 60–71 (TVRYKKLRHPLN) the chain is on the cytoplasmic side. Residues 72–97 (YVLVNVSVGGFLLCIFSVLPVFVNSC) traverse the membrane as a helical segment. The Extracellular segment spans residues 98–111 (NGYFVFGRHVCALE). Cys108 and Cys185 form a disulfide bridge. The helical transmembrane segment at 112–131 (GFLGTVAGLVTGWSLAFLAF) threads the bilayer. The Cytoplasmic segment spans residues 132–150 (ERYIVICKPFGNFRFSSKH). Residues 151-174 (ALMVVLTTWTIGIGVSIPPFFGWS) form a helical membrane-spanning segment. Residues 175–200 (RYIAEGLQCSCGPDWYTVGTKYRSEY) lie on the Extracellular side of the membrane. A helical transmembrane segment spans residues 201-228 (YTWFLFIFCFIVPLSLICFSYAQLLRAL). Residues 229 to 250 (KAVAAQQQESATTQKAEREVSR) lie on the Cytoplasmic side of the membrane. The chain crosses the membrane as a helical span at residues 251–274 (MVVVMVGSFCVCYVPYAALAMYMV). Residues 275-282 (NNRNHGLD) lie on the Extracellular side of the membrane. The chain crosses the membrane as a helical span at residues 283-307 (LRLVSIPAFFSKSSCIYNPIIYCFM). An N6-(retinylidene)lysine modification is found at Lys294. Residues 308–349 (NKQFRACIMEMVCGKAMTDESDISSSQKTEVSTVSSSQVGPN) are Cytoplasmic-facing.

Belongs to the G-protein coupled receptor 1 family. Opsin subfamily. Phosphorylated on some or all of the serine and threonine residues present in the C-terminal region.

The protein localises to the cell membrane. It localises to the photoreceptor inner segment. It is found in the cell projection. The protein resides in the cilium. Its subcellular location is the photoreceptor outer segment. The protein localises to the cytoplasm. It localises to the perinuclear region. In terms of biological role, visual pigments are the light-absorbing molecules that mediate vision. They consist of an apoprotein, opsin, covalently linked to cis-retinal. Required for the maintenance of cone outer segment organization in the ventral retina, but not essential for the maintenance of functioning cone photoreceptors. Involved in ensuring correct abundance and localization of retinal membrane proteins. May increase spectral sensitivity in dim light. This Saimiri boliviensis boliviensis (Bolivian squirrel monkey) protein is Short-wave-sensitive opsin 1 (OPN1SW).